A 60-amino-acid polypeptide reads, in one-letter code: MAVQQNKKSPSKRGMHRSHNALNVPGIAVESTTGEIHLRHHISPTGFYRGRKVLKTKAEA.

The interval 1 to 25 (MAVQQNKKSPSKRGMHRSHNALNVP) is disordered. The segment covering 9-19 (SPSKRGMHRSH) has biased composition (basic residues).

The protein belongs to the bacterial ribosomal protein bL32 family.

The chain is Large ribosomal subunit protein bL32 from Polaromonas naphthalenivorans (strain CJ2).